The chain runs to 115 residues: Ribonuclease P protein component 4 (115 aa).

Cysteine 66, cysteine 69, cysteine 96, and cysteine 99 together coordinate Zn(2+).

Belongs to the eukaryotic/archaeal RNase P protein component 4 family. As to quaternary structure, consists of a catalytic RNA component and at least 4-5 protein subunits. Requires Zn(2+) as cofactor.

Its subcellular location is the cytoplasm. It carries out the reaction Endonucleolytic cleavage of RNA, removing 5'-extranucleotides from tRNA precursor.. In terms of biological role, part of ribonuclease P, a protein complex that generates mature tRNA molecules by cleaving their 5'-ends. In Hyperthermus butylicus (strain DSM 5456 / JCM 9403 / PLM1-5), this protein is Ribonuclease P protein component 4.